The following is a 591-amino-acid chain: 2-succinyl-5-enolpyruvyl-6-hydroxy-3-cyclohexene-1-carboxylate synthase (591 aa).

It belongs to the TPP enzyme family. MenD subfamily. As to quaternary structure, homodimer. It depends on Mg(2+) as a cofactor. Mn(2+) is required as a cofactor. The cofactor is thiamine diphosphate.

The catalysed reaction is isochorismate + 2-oxoglutarate + H(+) = 5-enolpyruvoyl-6-hydroxy-2-succinyl-cyclohex-3-ene-1-carboxylate + CO2. It participates in quinol/quinone metabolism; 1,4-dihydroxy-2-naphthoate biosynthesis; 1,4-dihydroxy-2-naphthoate from chorismate: step 2/7. It functions in the pathway quinol/quinone metabolism; menaquinone biosynthesis. In terms of biological role, catalyzes the thiamine diphosphate-dependent decarboxylation of 2-oxoglutarate and the subsequent addition of the resulting succinic semialdehyde-thiamine pyrophosphate anion to isochorismate to yield 2-succinyl-5-enolpyruvyl-6-hydroxy-3-cyclohexene-1-carboxylate (SEPHCHC). The polypeptide is 2-succinyl-5-enolpyruvyl-6-hydroxy-3-cyclohexene-1-carboxylate synthase (Salinibacter ruber (strain DSM 13855 / M31)).